The primary structure comprises 1125 residues: MKVDELPIDERIKRVIKERGIEELYPPQAEALKSGVLEGKNLVLAIPTASGKTLVSEIVMVNKLLSEGGKAVYLVPLKALAEEKYREFKEWEVLGLRVAATTGDYDSTDEWLGRYDIIVATAEKFDSLLRHGASWIKDVKLVVADEVHLIGSYDRGATLEMILTHMLGKAQILALSATVGNAEELAEWLDASLVVSDWRPVELRKGVFHLGQLFWEDGKIDHYPENWESLVLDAVKKGKQALVFVNTRRSAEKEAISLSSKVSKLLTKPETRRLEELISSIEDNPTTEKLKRALKGGVAFHHAGLSRAERTLIEDAFRNGLIKVITATPTLCMHPDTYVVTKSGAKKVSELTEGDEVLTHTGTFKKVIQPLRREHKGRLLVIKAYGTVPVKITPEHMVWVVKQIRHKSHYSDGRQVIWWEFEGPEWMTAQELKERLESETDPKVSYMLLQPIPEPSVDADKIPLRKEVYVVNQHGKTDKLHPSVKRTPEYLPLNFETARLIGLWIAEGSTSKNGVIKFDISSNEEDLTEFITGTIRKYFPHAKIVVKDHERNRRTVRFCNKRFAEWLRENIGHGADNKSIPPLLLLNKNREVRLGLLRGLIEGDGYVRRESQRRANYISYSTVSPSLAYQLQLLVASLGYTSSIHRSIRTEGIGKTRKPIYDVKVSGKSYYSLLEELGFEVPQRGNRTYNVNRTWKNYLLLKVRSIEEEEYEGDVYNLEVEGDESYSVGFIVHNSAGINLPAFRVIIRDTKRYANFGWTDIPVLEIQQMMGRAGRPKYDKVGEAIIVARTEDPKKLIDRYIHGKPEKLFSMLANEQAFRSQVLALITNFGVEDFRELVDFLSRTFYAHQRGDTSSLEYKAKDIVYFLIENEFIDMDVENRFIALPFGRRTSQLYIDPLTAKKFKDAFPAIERNPNPFGIFQLLASTPDMATLTARRREMEDYLDLAYEMEEHLYSSIPYYEDSRFQGFLGQVKTAKVLLDWINEVPEARIYETYNIDPGDLYRILELADWLMYSLIELYKLFEPKEDVLQYLRDLHLRLRHGVREELLELVKLPNIGRRRARALYNAGFRSVEDILRAKPKDLLQVEGIGLKIIEGIYRHLGVEYTISEKEKPKKRKGNLYDFLK.

The Q motif signature appears at 1 to 29 (MKVDELPIDERIKRVIKERGIEELYPPQA). ATP contacts are provided by residues Gln-28 and 46 to 53 (IPTASGKT). The Helicase ATP-binding domain occupies 33–197 (KSGVLEGKNL…WLDASLVVSD (165 aa)). Positions 145 to 148 (DEVH) match the DEAH box motif. The region spanning 226-440 (NWESLVLDAV…ELKERLESET (215 aa)) is the Helicase C-terminal domain. The 141-residue stretch at 500-640 (LIGLWIAEGS…LQLLVASLGY (141 aa)) folds into the DOD-type homing endonuclease domain.

Belongs to the helicase family. Hel308 subfamily. Monomer. This protein undergoes a protein self splicing that involves a post-translational excision of the intervening region (intein) followed by peptide ligation.

The catalysed reaction is Couples ATP hydrolysis with the unwinding of duplex DNA by translocating in the 3'-5' direction.. It catalyses the reaction ATP + H2O = ADP + phosphate + H(+). In terms of biological role, DNA-dependent ATPase and 3'-5' DNA helicase that may be involved in repair of stalled replication forks. The protein is ATP-dependent DNA helicase Hel308 of Thermococcus kodakarensis (strain ATCC BAA-918 / JCM 12380 / KOD1) (Pyrococcus kodakaraensis (strain KOD1)).